Reading from the N-terminus, the 390-residue chain is MADLLKLCLRIAYAYGRLTGVINFKIDLKTGQALVTRGATLISVSTHLLIFALLLYQTMRKSVVNVMWKYANSLHEYVFLVIAGFRVVCVFLELVSRWSQRRTFVRLFNSFRRLYQRNPDIIQYCRRSIVSKFFCVTMTETLHIIVTLAMMRNRLSIALALRIWAVLSLTAIINVIITQYYVATACVRGRYALLNKDLQAIVTESQSLVPNGGGVFVTKCCYLADRLERIAKSQSDLQELVENLSTAYEGEVVCLVITYYLNMLGTSYLLFSISKYGNFGNNLLVIITLCGIVYFVFYVVDCWINAFNVFYLLDAHDKMVKLLNKRTLFQPGLDHRLEMVFENFALNLVRNPLKLHMYGLFEFGRGTSFAVFNSLLTHSLLLIQYDVQNF.

Over 1-38 (MADLLKLCLRIAYAYGRLTGVINFKIDLKTGQALVTRG) the chain is Cytoplasmic. Residues 39 to 59 (ATLISVSTHLLIFALLLYQTM) form a helical membrane-spanning segment. Residues 60–75 (RKSVVNVMWKYANSLH) are Extracellular-facing. A helical membrane pass occupies residues 76 to 96 (EYVFLVIAGFRVVCVFLELVS). Residues 97–128 (RWSQRRTFVRLFNSFRRLYQRNPDIIQYCRRS) are Cytoplasmic-facing. The chain crosses the membrane as a helical span at residues 129 to 149 (IVSKFFCVTMTETLHIIVTLA). Over 150–156 (MMRNRLS) the chain is Extracellular. A helical transmembrane segment spans residues 157 to 177 (IALALRIWAVLSLTAIINVII). Residues 178 to 252 (TQYYVATACV…NLSTAYEGEV (75 aa)) lie on the Cytoplasmic side of the membrane. A helical membrane pass occupies residues 253–273 (VCLVITYYLNMLGTSYLLFSI). At 274–283 (SKYGNFGNNL) the chain is on the extracellular side. Residues 284–304 (LVIITLCGIVYFVFYVVDCWI) traverse the membrane as a helical segment. Residues 305–366 (NAFNVFYLLD…MYGLFEFGRG (62 aa)) are Cytoplasmic-facing. Residues 367–383 (TSFAVFNSLLTHSLLLI) form a helical membrane-spanning segment. Topologically, residues 384–390 (QYDVQNF) are extracellular.

The protein belongs to the insect chemoreceptor superfamily. Gustatory receptor (GR) family. Gr22e subfamily. As to expression, expressed in the adult labellar chemosensory neurons. In larvae, is expressed in neurons of the terminal external chemosensory organ as well as in the dorsal pharyngeal sense organ.

It localises to the cell membrane. Functionally, probable gustatory receptor which mediates acceptance or avoidance behavior, depending on its substrates. The protein is Putative gustatory receptor 59d (Gr59d) of Drosophila melanogaster (Fruit fly).